Here is a 370-residue protein sequence, read N- to C-terminus: MLSPDVLKKLEAIEQRFEELTQLLSDPAVAGNGDRFRKVAKERASIEQTVTALRAYRKLLDDVAGNEALLGDKDPELRELAKEELAQLRPQVEPAEEQLKLYLVPKDPNDEKDVIVEIRAGAGGDEAGLFAAEVMRMYVRYAERRGWRVELMDTSGGALGGVKEATLTVSGDAVYSSLKYESGVHRVQRVPATEAQGRIHTSTVTVAVMPEAEEIDVQVNPADVEMDVFRSTGSGGQSVNTTDSAVRLTHKPTGIVVKCQQEKSQLKNRTMAMKMLRAKLFEIEQERQRSARDATRKSQVGTGDRSEKIRTYNFPQDRLTDHRVNYTRHNLPAVMDGDVQDVIDACRTFYAAQALREASRGDAGAAERRA.

Glutamine 237 bears the N5-methylglutamine mark. The segment covering 286–296 (ERQRSARDATR) has biased composition (basic and acidic residues). The segment at 286 to 310 (ERQRSARDATRKSQVGTGDRSEKIR) is disordered.

The protein belongs to the prokaryotic/mitochondrial release factor family. Post-translationally, methylated by PrmC. Methylation increases the termination efficiency of RF1.

Its subcellular location is the cytoplasm. Functionally, peptide chain release factor 1 directs the termination of translation in response to the peptide chain termination codons UAG and UAA. The chain is Peptide chain release factor 1 from Anaeromyxobacter dehalogenans (strain 2CP-C).